The sequence spans 787 residues: Serine/threonine-protein kinase SCH9 (787 aa).

Disordered regions lie at residues 1 to 82 (MVDF…QSGT), 132 to 172 (PQQQ…GSSQ), and 238 to 280 (SPVS…LFGQ). Low complexity predominate over residues 132-155 (PQQQQQQQAQQPPPEQQQSSAPYQ). 2 stretches are compositionally biased toward polar residues: residues 156–172 (NSAN…GSSQ) and 239–263 (PVSS…SNHG). In terms of domain architecture, C2 spans 182-354 (DKTGNKLSPA…KNNKNESEWL (173 aa)). A Protein kinase domain is found at 392-653 (FHFLRLLGKG…ARELKAHPFF (262 aa)). ATP contacts are provided by residues 398-406 (LGKGTFGQV) and lysine 421. Residue aspartate 518 is the Proton acceptor of the active site. The AGC-kinase C-terminal domain maps to 654–729 (ADIDWDLLRA…VDDSTMDDHF (76 aa)).

Belongs to the protein kinase superfamily. AGC Ser/Thr protein kinase family. cAMP subfamily.

It carries out the reaction L-seryl-[protein] + ATP = O-phospho-L-seryl-[protein] + ADP + H(+). The catalysed reaction is L-threonyl-[protein] + ATP = O-phospho-L-threonyl-[protein] + ADP + H(+). Functionally, protein kinase that is part of growth control pathway which is at least partially redundant with the cAMP pathway. Plays a role in filamentous growth and virulence. Prevents hypha formation specifically under hypoxia at high CO(2) levels. Required for chlamydospore formation, distinctive morphological feature of the fungal pathogen C.albicans that can be induced to form in oxygen-limited environments and has been reported in clinical specimens. This Candida albicans (strain SC5314 / ATCC MYA-2876) (Yeast) protein is Serine/threonine-protein kinase SCH9 (SCH9).